Here is a 417-residue protein sequence, read N- to C-terminus: NADH-quinone oxidoreductase subunit D (417 aa).

Belongs to the complex I 49 kDa subunit family. As to quaternary structure, NDH-1 is composed of 14 different subunits. Subunits NuoB, C, D, E, F, and G constitute the peripheral sector of the complex.

It is found in the cell inner membrane. The catalysed reaction is a quinone + NADH + 5 H(+)(in) = a quinol + NAD(+) + 4 H(+)(out). Its function is as follows. NDH-1 shuttles electrons from NADH, via FMN and iron-sulfur (Fe-S) centers, to quinones in the respiratory chain. The immediate electron acceptor for the enzyme in this species is believed to be ubiquinone. Couples the redox reaction to proton translocation (for every two electrons transferred, four hydrogen ions are translocated across the cytoplasmic membrane), and thus conserves the redox energy in a proton gradient. In Leptothrix cholodnii (strain ATCC 51168 / LMG 8142 / SP-6) (Leptothrix discophora (strain SP-6)), this protein is NADH-quinone oxidoreductase subunit D.